The chain runs to 183 residues: Streptavidin (183 aa).

Positions 1 to 24 (MRKIVVAAIAVSLTTVSITASASA) are cleaved as a signal peptide. Positions 37–159 (AEAGITGTWY…GHDTFTKVKP (123 aa)) constitute an Avidin-like domain. 2 residues coordinate biotin: Tyr-67 and Tyr-78. Residues 83–85 (RYD) carry the Cell attachment site; atypical motif. Biotin is bound by residues Trp-116, Trp-132, and Trp-144.

Belongs to the avidin/streptavidin family. Homotetramer.

The protein resides in the secreted. Its function is as follows. The biological function of streptavidin is not known. Forms a strong non-covalent specific complex with biotin (one molecule of biotin per subunit of streptavidin). In Streptomyces avidinii, this protein is Streptavidin.